The following is a 256-amino-acid chain: tRNA pseudouridine synthase A (256 aa).

Residue D55 is the Nucleophile of the active site. Y113 is a binding site for substrate.

This sequence belongs to the tRNA pseudouridine synthase TruA family. Homodimer.

It catalyses the reaction uridine(38/39/40) in tRNA = pseudouridine(38/39/40) in tRNA. In terms of biological role, formation of pseudouridine at positions 38, 39 and 40 in the anticodon stem and loop of transfer RNAs. The protein is tRNA pseudouridine synthase A of Limosilactobacillus reuteri (strain DSM 20016) (Lactobacillus reuteri).